A 123-amino-acid polypeptide reads, in one-letter code: MIQMQSTLDAADNSGARRVMCIKVLGGSHRRYAHIGDIIKITVKEAIPRGKVKKGDVLKAVVVRTRKGVRRQDGSVIRFDRNACVLLNDTTEQPIGTRIFGPVTRELRNTKFMKIVSLAPEVL.

The protein belongs to the universal ribosomal protein uL14 family. In terms of assembly, part of the 50S ribosomal subunit. Forms a cluster with proteins L3 and L19. In the 70S ribosome, L14 and L19 interact and together make contacts with the 16S rRNA in bridges B5 and B8.

Functionally, binds to 23S rRNA. Forms part of two intersubunit bridges in the 70S ribosome. The sequence is that of Large ribosomal subunit protein uL14 from Photobacterium profundum (strain SS9).